Consider the following 215-residue polypeptide: Large ribosomal subunit protein bL25 (215 aa).

Residues 160 to 215 form a disordered region; it reads GDLPLPEGSELVTEPEETVMSVVAPETEEEPDTEEDEEGEEDVEEESEEEEEESEE. Residues 185-215 show a composition bias toward acidic residues; that stretch reads ETEEEPDTEEDEEGEEDVEEESEEEEEESEE.

The protein belongs to the bacterial ribosomal protein bL25 family. CTC subfamily. Part of the 50S ribosomal subunit; part of the 5S rRNA/L5/L18/L25 subcomplex. Contacts the 5S rRNA. Binds to the 5S rRNA independently of L5 and L18.

In terms of biological role, this is one of the proteins that binds to the 5S RNA in the ribosome where it forms part of the central protuberance. This Natranaerobius thermophilus (strain ATCC BAA-1301 / DSM 18059 / JW/NM-WN-LF) protein is Large ribosomal subunit protein bL25.